Reading from the N-terminus, the 120-residue chain is Putative ferric transport system permease-like protein AfuB (120 aa).

Residues 1 to 38 (MESLPGQIDKSLDEASLSLRAGSLRTITHILLPLLRPA) are Cytoplasmic-facing. Positions 1–102 (MESLPGQIDK…VVMLAIIFIF (102 aa)) constitute an ABC transmembrane type-1 domain. A helical membrane pass occupies residues 39–59 (ILSALIYSFVRAITTVSAIVF). The Periplasmic portion of the chain corresponds to 60–81 (LVTPDTRVATAYILNRVEDGEY). Residues 82–102 (GVAIAYGSILIVVMLAIIFIF) form a helical membrane-spanning segment. Over 103–120 (DWLIGESRTSRSKAKNQA) the chain is Cytoplasmic.

It belongs to the binding-protein-dependent transport system permease family. FbpB subfamily.

The protein resides in the cell inner membrane. In terms of biological role, a severely truncated paralog of the AfuB uptake protein, homologous only to the last 20% of the intact protein in Actinobacillus. This Escherichia coli (strain K12) protein is Putative ferric transport system permease-like protein AfuB (afuB).